A 76-amino-acid polypeptide reads, in one-letter code: Large ribosomal subunit protein uL24 (76 aa).

Belongs to the universal ribosomal protein uL24 family. Part of the 50S ribosomal subunit.

Functionally, one of two assembly initiator proteins, it binds directly to the 5'-end of the 23S rRNA, where it nucleates assembly of the 50S subunit. One of the proteins that surrounds the polypeptide exit tunnel on the outside of the subunit. This chain is Large ribosomal subunit protein uL24, found in Campylobacter hominis (strain ATCC BAA-381 / DSM 21671 / CCUG 45161 / LMG 19568 / NCTC 13146 / CH001A).